The sequence spans 80 residues: Nuclear protein 1 (80 aa).

2 disordered regions span residues 1–21 and 38–80; these read MATL…EDED and VGGG…KAWR. A compositionally biased stretch (basic and acidic residues) spans 61 to 80; the sequence is GHERKLLTKFQNSERKKAWR. Positions 64–80 match the Nuclear localization signal motif; it reads RKLLTKFQNSERKKAWR.

Belongs to the NUPR family. As to quaternary structure, monomer. Directly interacts with MSL1 and binds MORF4L1, two components of histone acetyltransferase complex; the interaction with MORF4L1 may be mediated by MSL1. Interacts with EP300; this interaction enhances the effect of EP300 on PAX2 transcription factor activity. Interacts with PAXIP1; this interaction prevents PAXIP1 inhibition of PAX2 transcription factor activity. Interacts with COPS5; this interaction allows COPS5-dependent CDKN1B nuclear to cytoplasm translocation. Interacts with RNF2. Interacts with FOXO3; this interaction represses FOXO3 transactivation. Interacts with PTMA; regulates apoptotic process. Interacts with MYOD1, EP300 and DDX5; this interaction coordinates the association of anti-proliferative and pro-myogenic proteins at the myogenin promoter. Interacts with TP53; interaction is stress-dependent. Forms a complex with EP300 and TP53; this complex binds CDKN1A promoter leading to transcriptional induction of CDKN1A. In terms of processing, phosphorylated. Phosphorylation promotes DNA-binding activity. Acetylated. In terms of tissue distribution, highly expressed in pancreas and both ovaries and testes.

The protein localises to the nucleus. Its subcellular location is the cytoplasm. The protein resides in the perinuclear region. Its function is as follows. Transcription regulator that converts stress signals into a program of gene expression that empowers cells with resistance to the stress induced by a change in their microenvironment. Thereby participates in the regulation of many processes namely cell-cycle, apoptosis, autophagy and DNA repair responses. Controls cell cycle progression and protects cells from genotoxic stress induced by doxorubicin through the complex formation with TP53 and EP300 that binds CDKN1A promoter leading to transcriptional induction of CDKN1A. Protects pancreatic cancer cells from stress-induced cell death by binding the RELB promoter and activating its transcription, leading to IER3 transactivation. Negatively regulates apoptosis through interaction with PTMA. Inhibits autophagy-induced apoptosis in cardiac cells through FOXO3 interaction, inducing cytoplasmic translocation of FOXO3 thereby preventing the FOXO3 association with the pro-autophagic BNIP3 promoter. Inhibits cell growth and facilitates programmed cell death by apoptosis after adriamycin-induced DNA damage through transactivation of TP53. Regulates methamphetamine-induced apoptosis and autophagy through DDIT3-mediated endoplasmic reticulum stress pathway. Participates in DNA repair following gamma-irradiation by facilitating DNA access of the transcription machinery through interaction with MSL1 leading to inhibition of histone H4' Lys-16' acetylation (H4K16ac). Coactivator of PAX2 transcription factor activity, both by recruiting the EP300 cofactor to increase PAX2 transcription factor activity and by binding PAXIP1 to suppress PAXIP1-induced inhibition on PAX2. Positively regulates cell cycle progression through interaction with COPS5 inducing cytoplasmic translocation of CDKN1B leading to the CDKN1B degradation. Coordinates, through its interaction with EP300, the assiociation of MYOD1, EP300 and DDX5 to the MYOG promoter, leading to inhibition of cell-cycle progression and myogenic differentiation promotion. Negatively regulates beta cell proliferation via inhibition of cell-cycle regulatory genes expression through the suppression of their promoter activities. Also required for LHB expression and ovarian maturation. Exacerbates CNS inflammation and demyelination upon cuprizone treatment. The protein is Nuclear protein 1 of Mus musculus (Mouse).